Here is a 102-residue protein sequence, read N- to C-terminus: Large ribosomal subunit protein bL21 (102 aa).

Belongs to the bacterial ribosomal protein bL21 family. In terms of assembly, part of the 50S ribosomal subunit. Contacts protein L20.

Functionally, this protein binds to 23S rRNA in the presence of protein L20. This Syntrophotalea carbinolica (strain DSM 2380 / NBRC 103641 / GraBd1) (Pelobacter carbinolicus) protein is Large ribosomal subunit protein bL21.